The primary structure comprises 416 residues: Serine hydroxymethyltransferase (416 aa).

Residues leucine 121 and 125–127 (GHL) contribute to the (6S)-5,6,7,8-tetrahydrofolate site. Lysine 229 is subject to N6-(pyridoxal phosphate)lysine. Residues glutamate 245 and 354–356 (SPF) each bind (6S)-5,6,7,8-tetrahydrofolate.

The protein belongs to the SHMT family. As to quaternary structure, homodimer. It depends on pyridoxal 5'-phosphate as a cofactor.

It localises to the cytoplasm. It carries out the reaction (6R)-5,10-methylene-5,6,7,8-tetrahydrofolate + glycine + H2O = (6S)-5,6,7,8-tetrahydrofolate + L-serine. It functions in the pathway one-carbon metabolism; tetrahydrofolate interconversion. Its pathway is amino-acid biosynthesis; glycine biosynthesis; glycine from L-serine: step 1/1. Functionally, catalyzes the reversible interconversion of serine and glycine with tetrahydrofolate (THF) serving as the one-carbon carrier. This reaction serves as the major source of one-carbon groups required for the biosynthesis of purines, thymidylate, methionine, and other important biomolecules. Also exhibits THF-independent aldolase activity toward beta-hydroxyamino acids, producing glycine and aldehydes, via a retro-aldol mechanism. This chain is Serine hydroxymethyltransferase, found in Aliivibrio salmonicida (strain LFI1238) (Vibrio salmonicida (strain LFI1238)).